Here is a 243-residue protein sequence, read N- to C-terminus: Ubiquinone/menaquinone biosynthesis C-methyltransferase UbiE (243 aa).

S-adenosyl-L-methionine-binding positions include T69, D90, and 116-117 (DA).

Belongs to the class I-like SAM-binding methyltransferase superfamily. MenG/UbiE family.

The catalysed reaction is a 2-demethylmenaquinol + S-adenosyl-L-methionine = a menaquinol + S-adenosyl-L-homocysteine + H(+). The enzyme catalyses a 2-methoxy-6-(all-trans-polyprenyl)benzene-1,4-diol + S-adenosyl-L-methionine = a 5-methoxy-2-methyl-3-(all-trans-polyprenyl)benzene-1,4-diol + S-adenosyl-L-homocysteine + H(+). It functions in the pathway quinol/quinone metabolism; menaquinone biosynthesis; menaquinol from 1,4-dihydroxy-2-naphthoate: step 2/2. The protein operates within cofactor biosynthesis; ubiquinone biosynthesis. In terms of biological role, methyltransferase required for the conversion of demethylmenaquinol (DMKH2) to menaquinol (MKH2) and the conversion of 2-polyprenyl-6-methoxy-1,4-benzoquinol (DDMQH2) to 2-polyprenyl-3-methyl-6-methoxy-1,4-benzoquinol (DMQH2). The polypeptide is Ubiquinone/menaquinone biosynthesis C-methyltransferase UbiE (Cupriavidus pinatubonensis (strain JMP 134 / LMG 1197) (Cupriavidus necator (strain JMP 134))).